Here is a 401-residue protein sequence, read N- to C-terminus: Divinyl chlorophyllide a 8-vinyl-reductase, chloroplastic (401 aa).

Residues 1 to 10 (MATILLSSRL) show a composition bias toward polar residues. The disordered stretch occupies residues 1-26 (MATILLSSRLPTTGTATPSPTRPAPR). The transit peptide at 1–54 (MATILLSSRLPTTGTATPSPTRPAPRFLSFPGTAIRRRGRGPLLASSAVSPPAP) directs the protein to the chloroplast.

It is found in the plastid. Its subcellular location is the chloroplast. The catalysed reaction is protochlorophyllide a + NADP(+) = 3,8-divinyl protochlorophyllide a + NADPH + H(+). It participates in porphyrin-containing compound metabolism; chlorophyll biosynthesis. Functionally, catalyzes the conversion of divinyl chlorophyllide to monovinyl chlorophyllide. Reduces the 8-vinyl group of the tetrapyrrole to an ethyl group using NADPH as the reductant. Can use (3,8-divinyl)-chlorophyllide a (DV-Chlidea) &gt; (3,8-divinyl)-chlorophyll a (DV-Chla) &gt; (3,8-divinyl)-protochlorophyllide a (DV-Pchlidea) &gt; (3,8-divinyl)-magnesium-protoporphyrin IX monomethyl ester (DV-MPE) &gt; (3,8-divinyl)-magnesium-protoporphyrin IX (DV-Mg-Proto) as substrates. In Zea mays (Maize), this protein is Divinyl chlorophyllide a 8-vinyl-reductase, chloroplastic (DVR).